The chain runs to 608 residues: MAESIIIRVQSPDGVKRITATKRETAATFLKKVAKEFGFQNNGFSVYINRNKTGEITASSSKSLHLLKIKHGDLLFLFPSSLAGPSSEMETSTSVGLKAFGAPNVVEDEIDQYLSKQDGKIYRSRDPQLCRHGPLGKCVHCVPLEPFDEDYLNHLEPPVKHMSFHAYIRKLTGGADKGKFVALENISCKIKSGCEGHLPWPNGICTKCQPSAITLNRQKYRHVDNIMFENHTVADRFLDFWRKTGNQHFGYLYGRYTEHKDIPLGIRAEVAAIYEPPQIGTQNSLELLEDPKAEVVDEIAAKLGLRKVGWIFTDLVSEDTRKGTVRYSRNKDTYFLSSEECITAGDFQNKHPNICRLSPDGHFGSKFVTAVATGGPDNQVHFEGYQVSNQCMALVRDECLLPCKDAPELGYAKESSSEQYVPDVFYKDIDKFGNEITQLARPLPVEYLIIDITTTFPKDPVYTFSISQNPFPIENRDVLGETQDFHSLATYLSQNTSSVFLDTISDFHLLLFLVTNEVMPLQDSISLLLEAVRTRNEELAQTWKKSEQWATIEQLCSTVGVQLPGLHEFGAVGGSARAATSAMWACQHCTFMNQPGTGHCEMCSLPRT.

The residue at position 2 (A2) is an N-acetylalanine. An N6-acetyllysine modification is found at K179. The MPN domain maps to 226 to 363; that stretch reads IMFENHTVAD…ICRLSPDGHF (138 aa). The RanBP2-type zinc-finger motif lies at 580 to 608; the sequence is TSAMWACQHCTFMNQPGTGHCEMCSLPRT.

The protein belongs to the NPL4 family. Heterodimer with UFD1. The heterodimer binds ubiquitinated proteins. The heterodimer binds to VCP and inhibits Golgi membrane fusion. Interacts with ZFAND2B; probably through VCP.

Its subcellular location is the cytoplasm. The protein resides in the cytosol. The protein localises to the endoplasmic reticulum. It is found in the nucleus. The protein operates within protein degradation; proteasomal ubiquitin-dependent pathway. In terms of biological role, the ternary complex containing UFD1, VCP and NPLOC4 binds ubiquitinated proteins and is necessary for the export of misfolded proteins from the ER to the cytoplasm, where they are degraded by the proteasome. The NPLOC4-UFD1-VCP complex regulates spindle disassembly at the end of mitosis and is necessary for the formation of a closed nuclear envelope. Acts as a negative regulator of type I interferon production via the complex formed with VCP and UFD1, which binds to RIGI and recruits RNF125 to promote ubiquitination and degradation of RIGI. In Mus musculus (Mouse), this protein is Nuclear protein localization protein 4 homolog (Nploc4).